Reading from the N-terminus, the 496-residue chain is Lysosomal Pro-X carboxypeptidase (496 aa).

The signal sequence occupies residues M1–A21. Positions L22–A45 are excised as a propeptide. Residues N47 and N101 are each glycosylated (N-linked (GlcNAc...) asparagine). S179 functions as the Charge relay system in the catalytic mechanism. The segment at H194–Y334 is SKS domain. 4 disulfide bridges follow: C215-C372, C233-C310, C264-C343, and C364-C394. N317, N336, and N345 each carry an N-linked (GlcNAc...) asparagine glycan. N415 is a glycosylation site (N-linked (GlcNAc...) asparagine). Catalysis depends on charge relay system residues D430 and H455.

The protein belongs to the peptidase S28 family. As to quaternary structure, homodimer. In terms of tissue distribution, highest levels in placenta, lung and liver. Also present in heart, brain, pancreas and kidney.

Its subcellular location is the lysosome. The catalysed reaction is Cleavage of a -Pro-|-Xaa bond to release a C-terminal amino acid.. Its function is as follows. Cleaves C-terminal amino acids linked to proline in peptides such as angiotensin II, III and des-Arg9-bradykinin. This cleavage occurs at acidic pH, but enzymatic activity is retained with some substrates at neutral pH. The polypeptide is Lysosomal Pro-X carboxypeptidase (PRCP) (Homo sapiens (Human)).